The following is a 249-amino-acid chain: MESIVVSNWKMHFSFSEACNYLNLITSLHGNLNIAKVIFAVPNLYLSGLKLKFNDTYHFSAQDVSMITESSGPYTGEISASMLKNLNVNYAIVGHSERRLLFYEDANTIASKVRNCINNAIVPIVCIGEPIEARKNKTYLQYIAQQLSSISFSFTKNIIIAYEPVWSIGSCMVPTIDDIYEVVTMIREIQNRYIPHNIENSVKIVYGGSVSANNINQILTAGIDGVLIGKASLKLESLTTIIKTVQGLD.

Substrate is bound at residue 8–10 (NWK). The Electrophile role is filled by histidine 95. Catalysis depends on glutamate 163, which acts as the Proton acceptor. Residues glycine 169 and serine 209 each coordinate substrate.

It belongs to the triosephosphate isomerase family. In terms of assembly, homodimer.

It is found in the cytoplasm. The enzyme catalyses D-glyceraldehyde 3-phosphate = dihydroxyacetone phosphate. Its pathway is carbohydrate biosynthesis; gluconeogenesis. The protein operates within carbohydrate degradation; glycolysis; D-glyceraldehyde 3-phosphate from glycerone phosphate: step 1/1. Its function is as follows. Involved in the gluconeogenesis. Catalyzes stereospecifically the conversion of dihydroxyacetone phosphate (DHAP) to D-glyceraldehyde-3-phosphate (G3P). The protein is Triosephosphate isomerase of Orientia tsutsugamushi (strain Boryong) (Rickettsia tsutsugamushi).